Here is a 141-residue protein sequence, read N- to C-terminus: Putative nickel-responsive regulator (141 aa).

Ni(2+) contacts are provided by His80, His91, His93, and Cys99.

It belongs to the transcriptional regulatory CopG/NikR family. Ni(2+) is required as a cofactor.

Functionally, transcriptional regulator. The chain is Putative nickel-responsive regulator from Methanococcus maripaludis (strain C7 / ATCC BAA-1331).